The following is a 213-amino-acid chain: Kiwellin (213 aa).

Positions 1–24 (MAQLSLLVLSLFLTLISLPPPGAS) are cleaved as a signal peptide. 3 disulfides stabilise this stretch: Cys-28–Cys-60, Cys-32–Cys-44, and Cys-38–Cys-49. Residues Pro-65 and Pro-67 each carry the 4-hydroxyproline modification. Intrachain disulfides connect Cys-72–Cys-90, Cys-80–Cys-172, Cys-119–Cys-144, and Cys-166–Cys-182. A disordered region spans residues 91-121 (SPPVTSSTPAKLTNNDFSEGGDGGGPSECDE). The span at 93–107 (PVTSSTPAKLTNNDF) shows a compositional bias: polar residues.

This sequence belongs to the kiwellin family. In terms of processing, undergoes proteolytic cleavage by actinidin to produce kissper and KiTH. Three forms of KiTH are produced by cleavage at different sites.

Its subcellular location is the secreted. In terms of biological role, kissper is an anion-selective pore-forming peptide. The protein is Kiwellin of Actinidia chinensis var. chinensis (Chinese soft-hair kiwi).